The primary structure comprises 390 residues: Adherens junction-associated protein 1 (390 aa).

The signal sequence occupies residues 1–37 (MWITQLLGIRSGPPLGSHAWILIAIFQLAMDFIICES). Over 38-262 (ESPGKAYKHL…NDTSGLAVHQ (225 aa)) the chain is Extracellular. A disordered region spans residues 218–253 (LQNPGIHNGKKSPGRISTTDPNPGNGKTARPPRIPN). Residues 263 to 283 (IITITVSLIMVIAALITTLVL) traverse the membrane as a helical segment. Positions 283 to 390 (LKNCCAQSGN…VSEKWFEISC (108 aa)) are targeting signals. Residues 284–390 (KNCCAQSGNA…VSEKWFEISC (107 aa)) are Cytoplasmic-facing.

Its subcellular location is the basolateral cell membrane. It is found in the apical cell membrane. The protein resides in the cell junction. It localises to the adherens junction. In terms of biological role, may play a role in cell adhesion and cell migration. In Xenopus tropicalis (Western clawed frog), this protein is Adherens junction-associated protein 1 (ajap1).